The following is a 157-amino-acid chain: SsrA-binding protein (157 aa).

The tract at residues 130 to 157 is disordered; it reads HDKRQDMAKKDSQRRIQKELGQRQKGME. Over residues 132–157 the composition is skewed to basic and acidic residues; that stretch reads KRQDMAKKDSQRRIQKELGQRQKGME.

This sequence belongs to the SmpB family.

The protein resides in the cytoplasm. Functionally, required for rescue of stalled ribosomes mediated by trans-translation. Binds to transfer-messenger RNA (tmRNA), required for stable association of tmRNA with ribosomes. tmRNA and SmpB together mimic tRNA shape, replacing the anticodon stem-loop with SmpB. tmRNA is encoded by the ssrA gene; the 2 termini fold to resemble tRNA(Ala) and it encodes a 'tag peptide', a short internal open reading frame. During trans-translation Ala-aminoacylated tmRNA acts like a tRNA, entering the A-site of stalled ribosomes, displacing the stalled mRNA. The ribosome then switches to translate the ORF on the tmRNA; the nascent peptide is terminated with the 'tag peptide' encoded by the tmRNA and targeted for degradation. The ribosome is freed to recommence translation, which seems to be the essential function of trans-translation. The chain is SsrA-binding protein from Alkaliphilus metalliredigens (strain QYMF).